Consider the following 269-residue polypeptide: MQRIYLFSDATGETVERVVRAALTQFRNVDVKLHRMSRLRTREDISISLDEAAKQPGVIFYTLVDNELAQYLYNEANLRQLEAIDLITPLLYRLASLLGIQPQKEPGLLYQLNSEYYKRMEAVDFTVKQDDGQEPRNLHKADIVLVGVSRTSKTPLSMYLAHKGYKVANVPLVMGIEPPSELYQVDNSRVVGLMIDAQRLVDIRTARLRNMRQNPRGSYADYQRVEEELDFCRRIYRKHPQWQVIDVTNKSVEESAAEILRRFETGIKD.

147 to 154 (GVSRTSKT) provides a ligand contact to ADP.

Belongs to the pyruvate, phosphate/water dikinase regulatory protein family. PDRP subfamily.

It catalyses the reaction N(tele)-phospho-L-histidyl/L-threonyl-[pyruvate, phosphate dikinase] + ADP = N(tele)-phospho-L-histidyl/O-phospho-L-threonyl-[pyruvate, phosphate dikinase] + AMP + H(+). The catalysed reaction is N(tele)-phospho-L-histidyl/O-phospho-L-threonyl-[pyruvate, phosphate dikinase] + phosphate + H(+) = N(tele)-phospho-L-histidyl/L-threonyl-[pyruvate, phosphate dikinase] + diphosphate. Bifunctional serine/threonine kinase and phosphorylase involved in the regulation of the pyruvate, phosphate dikinase (PPDK) by catalyzing its phosphorylation/dephosphorylation. In Geotalea daltonii (strain DSM 22248 / JCM 15807 / FRC-32) (Geobacter daltonii), this protein is Putative pyruvate, phosphate dikinase regulatory protein.